A 133-amino-acid polypeptide reads, in one-letter code: Ribosome-binding factor A (133 aa).

This sequence belongs to the RbfA family. Monomer. Binds 30S ribosomal subunits, but not 50S ribosomal subunits or 70S ribosomes.

It localises to the cytoplasm. Functionally, one of several proteins that assist in the late maturation steps of the functional core of the 30S ribosomal subunit. Associates with free 30S ribosomal subunits (but not with 30S subunits that are part of 70S ribosomes or polysomes). Required for efficient processing of 16S rRNA. May interact with the 5'-terminal helix region of 16S rRNA. The polypeptide is Ribosome-binding factor A (Bordetella pertussis (strain Tohama I / ATCC BAA-589 / NCTC 13251)).